A 257-amino-acid polypeptide reads, in one-letter code: Ribonuclease HII (257 aa).

An RNase H type-2 domain is found at 72-257; that stretch reads TYIAGIDEVG…FAPIKDMIQK (186 aa). Residues aspartate 78, glutamate 79, and aspartate 170 each contribute to the a divalent metal cation site.

It belongs to the RNase HII family. Mn(2+) is required as a cofactor. Requires Mg(2+) as cofactor.

It localises to the cytoplasm. The enzyme catalyses Endonucleolytic cleavage to 5'-phosphomonoester.. Functionally, endonuclease that specifically degrades the RNA of RNA-DNA hybrids. This is Ribonuclease HII from Bacillus mycoides (strain KBAB4) (Bacillus weihenstephanensis).